We begin with the raw amino-acid sequence, 248 residues long: Probable transcriptional regulatory protein Rsph17025_0577 (248 aa).

A disordered region spans residues 1-21 (MAGHSKWANIQHRKGKQDKLR).

Belongs to the TACO1 family.

Its subcellular location is the cytoplasm. The sequence is that of Probable transcriptional regulatory protein Rsph17025_0577 from Cereibacter sphaeroides (strain ATCC 17025 / ATH 2.4.3) (Rhodobacter sphaeroides).